We begin with the raw amino-acid sequence, 414 residues long: Serpin A3-6 (414 aa).

A signal peptide spans 1–25; sequence MRTERVSPLLALGILVAGLCSRVHC. Residues asparagine 103, asparagine 183, asparagine 233, asparagine 267, and asparagine 321 are each glycosylated (N-linked (GlcNAc...) asparagine).

It belongs to the serpin family. In terms of assembly, homodimer.

Its subcellular location is the cytoplasmic vesicle. It localises to the secretory vesicle. The protein resides in the chromaffin granule. The protein localises to the secreted. In terms of biological role, serine protease inhibitor. The polypeptide is Serpin A3-6 (Bos taurus (Bovine)).